Consider the following 510-residue polypeptide: Probable serine/threonine-protein kinase 2 (510 aa).

Residues 111 to 364 (YVLNKKIGKG…ALQALGHQWF (254 aa)) form the Protein kinase domain. Residues 117-125 (IGKGSFSTA) and K140 each bind ATP. D230 functions as the Proton acceptor in the catalytic mechanism. Positions 408-428 (NDDIYNNNNNNNQLDPNKNHK) are disordered.

Belongs to the protein kinase superfamily. Ser/Thr protein kinase family.

The protein resides in the membrane. The enzyme catalyses L-seryl-[protein] + ATP = O-phospho-L-seryl-[protein] + ADP + H(+). It catalyses the reaction L-threonyl-[protein] + ATP = O-phospho-L-threonyl-[protein] + ADP + H(+). The chain is Probable serine/threonine-protein kinase 2 (PK2) from Plasmodium falciparum (isolate K1 / Thailand).